A 321-amino-acid chain; its full sequence is Peptide transport system permease protein SapB (321 aa).

Helical transmembrane passes span 8–28 (HILW…VILL), 41–61 (IYIG…GITY), 82–102 (CFIT…ISAV), 117–137 (YVGL…VAAL), 150–170 (LLYE…FMEV), 180–200 (ILQH…MEII), 249–269 (VFTL…WPGI), and 289–309 (VIVI…FTFI). The ABC transmembrane type-1 domain maps to 75-303 (LPPTLELCFI…VCIILIDTFT (229 aa)).

Belongs to the binding-protein-dependent transport system permease family. OppBC subfamily.

It localises to the cell inner membrane. Functionally, involved in a peptide intake transport system that plays a role in the resistance to antimicrobial peptides. This Haemophilus influenzae (strain ATCC 51907 / DSM 11121 / KW20 / Rd) protein is Peptide transport system permease protein SapB (sapB).